We begin with the raw amino-acid sequence, 80 residues long: Protein FAM229B (80 aa).

Residues 1–44 (MPFRFGTQPRRFPVEGGDSSIGLEPGLSSSAACNGKEMSPTRQL) form a disordered region.

This sequence belongs to the FAM229 family.

The chain is Protein FAM229B (FAM229B) from Macaca fascicularis (Crab-eating macaque).